A 363-amino-acid chain; its full sequence is Pyruvate dehydrogenase E1 component subunit beta-1, mitochondrial (363 aa).

The transit peptide at 1 to 29 (MLGILRQRAIDGASTLRRTRFALVSARSY) directs the protein to the mitochondrion. Glutamate 92 provides a ligand contact to thiamine diphosphate. The K(+) site is built by isoleucine 145, alanine 193, isoleucine 194, and aspartate 196. Glycyl lysine isopeptide (Lys-Gly) (interchain with G-Cter in ubiquitin) cross-links involve residues lysine 247 and lysine 254.

In terms of assembly, tetramer of 2 alpha and 2 beta subunits. Thiamine diphosphate serves as cofactor. As to expression, expressed in roots, immature rosettes, and mature rosettes.

It is found in the mitochondrion matrix. It carries out the reaction N(6)-[(R)-lipoyl]-L-lysyl-[protein] + pyruvate + H(+) = N(6)-[(R)-S(8)-acetyldihydrolipoyl]-L-lysyl-[protein] + CO2. In terms of biological role, the pyruvate dehydrogenase complex catalyzes the overall conversion of pyruvate to acetyl-CoA and CO(2). It contains multiple copies of three enzymatic components: pyruvate dehydrogenase (E1), dihydrolipoamide acetyltransferase (E2) and lipoamide dehydrogenase (E3). The chain is Pyruvate dehydrogenase E1 component subunit beta-1, mitochondrial (PDH2) from Arabidopsis thaliana (Mouse-ear cress).